The sequence spans 435 residues: N-lysine methyltransferase SMYD2-A (435 aa).

The SET domain maps to 7–241; the sequence is EGTERFLSPG…PEEEIFNSYI (235 aa). 17-19 contributes to the S-adenosyl-L-methionine binding site; the sequence is KGR. Cysteine 52, cysteine 55, cysteine 65, cysteine 68, cysteine 74, cysteine 78, histidine 86, and cysteine 90 together coordinate Zn(2+). Residues 52 to 90 form an MYND-type zinc finger; the sequence is CECCFTRKEGLSKCGKCKQAYYCNVECQRGDWPMHKLEC. S-adenosyl-L-methionine contacts are provided by residues histidine 137, 206 to 207, and 258 to 260; these read NH and YFF.

Belongs to the class V-like SAM-binding methyltransferase superfamily.

It localises to the cytoplasm. Its subcellular location is the cytosol. The protein localises to the nucleus. It carries out the reaction L-lysyl(4)-[histone H3] + 3 S-adenosyl-L-methionine = N(6),N(6),N(6)-trimethyl-L-lysyl(4)-[histone H3] + 3 S-adenosyl-L-homocysteine + 3 H(+). The catalysed reaction is L-lysyl-[protein] + S-adenosyl-L-methionine = N(6)-methyl-L-lysyl-[protein] + S-adenosyl-L-homocysteine + H(+). Its function is as follows. Protein-lysine N-methyltransferase that methylates both histones and non-histone proteins, including p53/TP53 and RB1. Specifically trimethylates histone H3 'Lys-4' (H3K4me3) in vivo. The activity requires interaction with HSP90alpha. Shows even higher methyltransferase activity on p53/TP53. Monomethylates 'Lys-370' of p53/TP53, leading to decreased DNA-binding activity and subsequent transcriptional regulation activity of p53/TP53. Monomethylates RB1 at 'Lys-860'. This chain is N-lysine methyltransferase SMYD2-A (smyd2a), found in Danio rerio (Zebrafish).